The primary structure comprises 37 residues: Potassium channel toxin alpha-KTx 4.3 (37 aa).

3 disulfides stabilise this stretch: Cys7–Cys28, Cys13–Cys33, and Cys17–Cys35. The interval 26-33 (GKCMNGKC) is interaction with Ca(2+)-activated K(+) channels.

As to expression, expressed by the venom gland.

Its subcellular location is the secreted. Its function is as follows. Blocks reversibly Shaker B potassium-channels. This chain is Potassium channel toxin alpha-KTx 4.3, found in Tityus discrepans (Venezuelan scorpion).